Reading from the N-terminus, the 360-residue chain is Phosphoserine aminotransferase (360 aa).

Residue R42 coordinates L-glutamate. Residues 76–77, W102, T152, D172, and Q195 contribute to the pyridoxal 5'-phosphate site; that span reads AS. An N6-(pyridoxal phosphate)lysine modification is found at K196. 237–238 is a pyridoxal 5'-phosphate binding site; sequence NT.

The protein belongs to the class-V pyridoxal-phosphate-dependent aminotransferase family. SerC subfamily. Homodimer. Pyridoxal 5'-phosphate is required as a cofactor.

It localises to the cytoplasm. The catalysed reaction is O-phospho-L-serine + 2-oxoglutarate = 3-phosphooxypyruvate + L-glutamate. The enzyme catalyses 4-(phosphooxy)-L-threonine + 2-oxoglutarate = (R)-3-hydroxy-2-oxo-4-phosphooxybutanoate + L-glutamate. It participates in amino-acid biosynthesis; L-serine biosynthesis; L-serine from 3-phospho-D-glycerate: step 2/3. Functionally, catalyzes the reversible conversion of 3-phosphohydroxypyruvate to phosphoserine and of 3-hydroxy-2-oxo-4-phosphonooxybutanoate to phosphohydroxythreonine. The protein is Phosphoserine aminotransferase of Bacillus thuringiensis subsp. konkukian (strain 97-27).